We begin with the raw amino-acid sequence, 172 residues long: Cold-inducible RNA-binding protein (172 aa).

An RRM domain is found at 6–84 (GKLFVGGLSF…RQIRVDQAGK (79 aa)). The tract at residues 70–172 (KSVDGRQIRV…SYDSYATHNE (103 aa)) is disordered. 2 stretches are compositionally biased toward gly residues: residues 93 to 105 (YRGG…GFFR) and 114 to 137 (FSRG…GYGG). Residues Ser-130, Ser-138, Ser-146, Ser-156, Ser-159, and Ser-163 each carry the phosphoserine modification. A compositionally biased stretch (low complexity) spans 138–172 (SRDYYASRSQGGSYGYRSSGGSYRDSYDSYATHNE).

Interacts with EIF4G1. Associates with ribosomes. Methylated on arginine residues. Methylation of the RGG motifs is a prerequisite for recruitment into SGs. Post-translationally, phosphorylated by CK2, GSK3A and GSK3B. Phosphorylation by GSK3B increases RNA-binding activity to the TXN 3'-UTR transcript upon exposure to UV radiation. In terms of tissue distribution, ubiquitous.

The protein resides in the nucleus. It localises to the nucleoplasm. The protein localises to the cytoplasm. Cold-inducible mRNA binding protein that plays a protective role in the genotoxic stress response by stabilizing transcripts of genes involved in cell survival. Promotes assembly of stress granules (SGs), when overexpressed. Seems to play an essential role in cold-induced suppression of cell proliferation. Acts as a translational repressor. Acts as a translational activator. Binds specifically to the 3'-untranslated regions (3'-UTRs) of stress-responsive transcripts RPA2 and TXN. In Mus musculus (Mouse), this protein is Cold-inducible RNA-binding protein (Cirbp).